We begin with the raw amino-acid sequence, 297 residues long: Small ribosomal subunit protein uS2 (297 aa).

A disordered region spans residues 276-297 (DWASSAPAEGWAGEAPATEAKW).

Belongs to the universal ribosomal protein uS2 family. In terms of assembly, component of the small ribosomal subunit. Mature ribosomes consist of a small (40S) and a large (60S) subunit. The 40S subunit contains about 33 different proteins and 1 molecule of RNA (18S). The 60S subunit contains about 49 different proteins and 3 molecules of RNA (25S, 5.8S and 5S). Interacts with RPS21.

It is found in the cytoplasm. Its function is as follows. Required for the assembly and/or stability of the 40S ribosomal subunit. Required for the processing of the 20S rRNA-precursor to mature 18S rRNA in a late step of the maturation of 40S ribosomal subunits. The polypeptide is Small ribosomal subunit protein uS2 (Uncinocarpus reesii (strain UAMH 1704)).